We begin with the raw amino-acid sequence, 618 residues long: Sodium/iodide cotransporter (618 aa).

At 1-14 (MEGAEAGARATFGA) the chain is on the extracellular side. The helical transmembrane segment at 15 to 31 (WDYGVFATMLLVSTGIG) threads the bilayer. The Cytoplasmic portion of the chain corresponds to 32–56 (LWVGLARGGQRSADDFFTGGRQLAA). A discontinuously helical transmembrane segment spans residues 57-80 (VPVGLSLAASFMSAVQVLGVPAEA). Serine 69, valine 71, and glutamine 72 together coordinate Na(+). Valine 76 contacts iodide. At 81-84 (ARYG) the chain is on the extracellular side. The chain crosses the membrane as a helical span at residues 85-105 (LKFLWMCAGQLLNSLLTAFLF). Residue methionine 90 coordinates iodide. The Cytoplasmic portion of the chain corresponds to 106–130 (LPIFYRLGLTSTYQYLELRFSRAVR). The chain crosses the membrane as a helical span at residues 131 to 157 (LCGTLQYLVATMLYTGIVIYAPALILN). Residue tyrosine 144 participates in Na(+) binding. The Extracellular portion of the chain corresponds to 158-163 (QVTGLD). The helical transmembrane segment at 164-181 (IWASLLSTGIICTLYTTV) threads the bilayer. Residues 182–189 (GGMKAVVW) are Cytoplasmic-facing. A helical membrane pass occupies residues 190–208 (TDVFQVVVMLVGFWVILAR). At 209–243 (GVILLGGPRNVLSLAQNHSRINLMDFDPDPRSRYT) the chain is on the extracellular side. A discontinuously helical transmembrane segment spans residues 244–266 (FWTFIVGGTLVWLSMYGVNQAQV). Position 255 (tryptophan 255) interacts with iodide. Methionine 258 contributes to the Na(+) binding site. The Cytoplasmic portion of the chain corresponds to 267 to 278 (QRYVACHTEGKA). The helical transmembrane segment at 279-301 (KLALLVNQLGLFLIVASAACCGI) threads the bilayer. Topologically, residues 302–335 (VMFVYYKDCDPLLTGRISAPDQYMPLLVLDIFED) are extracellular. The chain crosses the membrane as a helical span at residues 336 to 363 (LPGVPGLFLACAYSGTLSTASTSINAMA). Residues 364 to 386 (AVTVEDLIKPRMPGLAPRKLVFI) are Cytoplasmic-facing. Residues 387–408 (SKGLSFIYGSACLTVAALSSLL) traverse the membrane as a helical segment. Topologically, residues 409 to 411 (GGG) are extracellular. Residues 412–437 (VLQGSFTVMGVISGPLLGAFTLGMLL) form a helical membrane-spanning segment. Leucine 413 contacts iodide. The Na(+) site is built by serine 416 and phenylalanine 417. Phenylalanine 417 provides a ligand contact to iodide. Topologically, residues 438–441 (PACN) are cytoplasmic. The chain crosses the membrane as a helical span at residues 442-465 (TPGVLSGLAAGLAVSLWVAVGATL). Over 466 to 520 (YPPGEQTMGVLPTSAAGCTNDSVLLGPPGATNASNGIPSSGMDTGRPALADTFYA) the chain is Extracellular. N-linked (GlcNAc...) asparagine glycans are attached at residues asparagine 485 and asparagine 497. A helical transmembrane segment spans residues 521–545 (ISYLYYGALGTLTTMLCGALISYLT). Topologically, residues 546–618 (GPTKRSSLGP…YLGHDVETNL (73 aa)) are cytoplasmic. At serine 551 the chain carries Phosphoserine; by PKA. A disordered region spans residues 587–618 (EDIPAVTKKPPGLKPGAETHPLYLGHDVETNL).

Belongs to the sodium:solute symporter (SSF) (TC 2.A.21) family. Monomer.

It localises to the cell membrane. The protein localises to the cytoplasm. It catalyses the reaction iodide(out) + 2 Na(+)(out) = iodide(in) + 2 Na(+)(in). It carries out the reaction chlorate(out) + 2 Na(+)(out) = chlorate(in) + 2 Na(+)(in). The enzyme catalyses thiocyanate(out) + 2 Na(+)(out) = thiocyanate(in) + 2 Na(+)(in). The catalysed reaction is nitrate(out) + 2 Na(+)(out) = nitrate(in) + 2 Na(+)(in). It catalyses the reaction selenocyanate(out) + 2 Na(+)(out) = selenocyanate(in) + 2 Na(+)(in). Perchlorate inhibits iodide transport activity. Oxyanions inhibit iodide transport activity by blocking the binding sites for iodide and one of the sodium ions. Functionally, sodium:iodide symporter that mediates the transport of iodide into the thyroid gland. Can also mediate the transport of chlorate, thiocynate, nitrate and selenocynate. This Rattus norvegicus (Rat) protein is Sodium/iodide cotransporter (Slc5a5).